A 544-amino-acid polypeptide reads, in one-letter code: Methionine--tRNA ligase 1 (544 aa).

Positions 10-20 match the 'HIGH' region motif; it reads PYANGSLHLGH. Residues cysteine 141, cysteine 144, cysteine 153, and cysteine 156 each coordinate Zn(2+). The 'KMSKS' region signature appears at 329–333; sequence KLSTS. An ATP-binding site is contributed by threonine 332.

The protein belongs to the class-I aminoacyl-tRNA synthetase family. MetG type 1 subfamily. In terms of assembly, monomer. It depends on Zn(2+) as a cofactor.

The protein localises to the cytoplasm. The catalysed reaction is tRNA(Met) + L-methionine + ATP = L-methionyl-tRNA(Met) + AMP + diphosphate. Its function is as follows. Is required not only for elongation of protein synthesis but also for the initiation of all mRNA translation through initiator tRNA(fMet) aminoacylation. This chain is Methionine--tRNA ligase 1, found in Bacillus cereus (strain ATCC 10987 / NRS 248).